The following is a 359-amino-acid chain: 3-dehydroquinate synthase (359 aa).

NAD(+) contacts are provided by residues 71–76, 105–109, 129–130, Lys142, Lys151, and 169–172; these read DGEQFK, GVIGD, TT, and CLHT. Residues Glu184, His247, and His264 each coordinate Zn(2+).

This sequence belongs to the sugar phosphate cyclases superfamily. Dehydroquinate synthase family. Co(2+) serves as cofactor. It depends on Zn(2+) as a cofactor. The cofactor is NAD(+).

It localises to the cytoplasm. It carries out the reaction 7-phospho-2-dehydro-3-deoxy-D-arabino-heptonate = 3-dehydroquinate + phosphate. It participates in metabolic intermediate biosynthesis; chorismate biosynthesis; chorismate from D-erythrose 4-phosphate and phosphoenolpyruvate: step 2/7. Functionally, catalyzes the conversion of 3-deoxy-D-arabino-heptulosonate 7-phosphate (DAHP) to dehydroquinate (DHQ). This is 3-dehydroquinate synthase from Shewanella putrefaciens (strain CN-32 / ATCC BAA-453).